The following is a 317-amino-acid chain: tRNA(Ile)-lysidine synthase (317 aa).

Position 30-35 (30-35) interacts with ATP; it reads SGGSDS.

The protein belongs to the tRNA(Ile)-lysidine synthase family.

Its subcellular location is the cytoplasm. It carries out the reaction cytidine(34) in tRNA(Ile2) + L-lysine + ATP = lysidine(34) in tRNA(Ile2) + AMP + diphosphate + H(+). Functionally, ligates lysine onto the cytidine present at position 34 of the AUA codon-specific tRNA(Ile) that contains the anticodon CAU, in an ATP-dependent manner. Cytidine is converted to lysidine, thus changing the amino acid specificity of the tRNA from methionine to isoleucine. The protein is tRNA(Ile)-lysidine synthase of Chlamydia caviae (strain ATCC VR-813 / DSM 19441 / 03DC25 / GPIC) (Chlamydophila caviae).